Consider the following 309-residue polypeptide: Olfactory receptor 8B4 (309 aa).

Over 1–25 (MTLRNSSSVTEFILVGLSEQPELQL) the chain is Extracellular. The N-linked (GlcNAc...) asparagine glycan is linked to Asn-5. A helical membrane pass occupies residues 26–46 (PLFLLFLGIYVFTVVGNLGLI). Residues 47–54 (TLIGINPS) lie on the Cytoplasmic side of the membrane. The chain crosses the membrane as a helical span at residues 55–75 (LHTPMYFFLFNLSFIDLCYSC). Over 76–98 (VFTPKMLNDFVSESIISYVGCMT) the chain is Extracellular. A disulfide bridge links Cys-96 with Cys-188. A helical membrane pass occupies residues 99–119 (QLFFFCFFVNSECYVLVSMAY). At 120–138 (DRYVAICNPLLYMVTMSPR) the chain is on the cytoplasmic side. Residues 139–159 (VCFLLMFGSYVVGFAGAMAHT) form a helical membrane-spanning segment. Over 160-196 (GSMLRLTFCDSNVIDHYLCDVLPLLQLSCTSTHVSEL) the chain is Extracellular. The chain crosses the membrane as a helical span at residues 197–216 (VFFIVVGVITMLSSISIVIS). Residues 217-236 (YALILSNILCIPSAEGRSKA) are Cytoplasmic-facing. The helical transmembrane segment at 237 to 257 (FSTWGSHIIAVALFFGSGTFT) threads the bilayer. Residues 258–270 (YLTTSFPGSMNHG) are Extracellular-facing. The helical transmembrane segment at 271-291 (RFASVFYTNVVPMLNPSIYSL) threads the bilayer. Residues 292–309 (RNKDDKLALGKTLKRVLF) lie on the Cytoplasmic side of the membrane.

Belongs to the G-protein coupled receptor 1 family.

The protein resides in the cell membrane. Functionally, odorant receptor. The sequence is that of Olfactory receptor 8B4 (OR8B4) from Homo sapiens (Human).